The primary structure comprises 490 residues: Betaine aldehyde dehydrogenase (490 aa).

The K(+) site is built by T26 and D93. 150–152 is an NAD(+) binding site; sequence GAW. Residue K162 is the Charge relay system of the active site. Residue 176-179 participates in NAD(+) binding; that stretch reads KPSE. V180 contacts K(+). 230–233 is a binding site for NAD(+); that stretch reads GVAT. L246 contacts K(+). E252 functions as the Proton acceptor in the catalytic mechanism. Residues G254, C286, and E387 each coordinate NAD(+). Catalysis depends on C286, which acts as the Nucleophile. At C286 the chain carries Cysteine sulfenic acid (-SOH). Residues K457 and G460 each contribute to the K(+) site. E464 functions as the Charge relay system in the catalytic mechanism.

This sequence belongs to the aldehyde dehydrogenase family. As to quaternary structure, dimer of dimers. The cofactor is K(+).

It carries out the reaction betaine aldehyde + NAD(+) + H2O = glycine betaine + NADH + 2 H(+). It functions in the pathway amine and polyamine biosynthesis; betaine biosynthesis via choline pathway; betaine from betaine aldehyde: step 1/1. Functionally, involved in the biosynthesis of the osmoprotectant glycine betaine. Catalyzes the irreversible oxidation of betaine aldehyde to the corresponding acid. This chain is Betaine aldehyde dehydrogenase, found in Stenotrophomonas maltophilia (strain R551-3).